Reading from the N-terminus, the 721-residue chain is Translation initiation factor eIF2B subunit epsilon (721 aa).

Residues 1-13 (MAAPVVAPPGVVV) are compositionally biased toward low complexity. The segment at 1–40 (MAAPVVAPPGVVVSRANKRSGAGPGGSGGGGARGAEEEPP) is disordered. An N-acetylalanine modification is found at Ala2. Position 19 is an omega-N-methylarginine (Arg19). A compositionally biased stretch (gly residues) spans 22 to 33 (AGPGGSGGGGAR). Ser27 carries the post-translational modification Phosphoserine. Glycyl lysine isopeptide (Lys-Gly) (interchain with G-Cter in ubiquitin) cross-links involve residues Lys61 and Lys103. Ser130 is subject to Phosphoserine. Glycyl lysine isopeptide (Lys-Gly) (interchain with G-Cter in ubiquitin) cross-links involve residues Lys141 and Lys217. Position 322 is a phosphothreonine (Thr322). Disordered regions lie at residues 444–483 (PEGS…MKGY) and 523–547 (EESE…SPQM). Phosphoserine is present on residues Ser450, Ser466, Ser469, Ser532, and Ser540. 2 stretches are compositionally biased toward acidic residues: residues 456–471 (AEED…DSGA) and 523–537 (EESE…DSEE). Residues 543-720 (GSPQMDDIKV…KEAEEESSED (178 aa)) enclose the W2 domain. A Phosphoserine; by DYRK2 modification is found at Ser544. Ser717 carries the phosphoserine modification.

It belongs to the eIF-2B gamma/epsilon subunits family. Component of the translation initiation factor 2B (eIF2B) complex which is a heterodecamer of two sets of five different subunits: alpha, beta, gamma, delta and epsilon. Subunits alpha, beta and delta comprise a regulatory subcomplex and subunits epsilon and gamma comprise a catalytic subcomplex. Within the complex, the hexameric regulatory complex resides at the center, with the two heterodimeric catalytic subcomplexes bound on opposite sides. Phosphorylated at Ser-544 by DYRK2; this is required for subsequent phosphorylation by GSK3B. Phosphorylated on serine and threonine residues by GSK3B; phosphorylation inhibits its function. Post-translationally, polyubiquitinated, probably by NEDD4.

Its subcellular location is the cytoplasm. The protein localises to the cytosol. With respect to regulation, activated by the chemical integrated stress response (ISR) inhibitor ISRIB which stimulates guanine nucleotide exchange factor activity for both phosphorylated and unphosphorylated eIF2. Its function is as follows. Acts as a component of the translation initiation factor 2B (eIF2B) complex, which catalyzes the exchange of GDP for GTP on eukaryotic initiation factor 2 (eIF2) gamma subunit. Its guanine nucleotide exchange factor activity is repressed when bound to eIF2 complex phosphorylated on the alpha subunit, thereby limiting the amount of methionyl-initiator methionine tRNA available to the ribosome and consequently global translation is repressed. This is Translation initiation factor eIF2B subunit epsilon (EIF2B5) from Homo sapiens (Human).